Here is a 482-residue protein sequence, read N- to C-terminus: UDP-N-acetylmuramate--L-alanine ligase (482 aa).

ATP is bound at residue 115–121 (GTHGKTT).

It belongs to the MurCDEF family.

It is found in the cytoplasm. It catalyses the reaction UDP-N-acetyl-alpha-D-muramate + L-alanine + ATP = UDP-N-acetyl-alpha-D-muramoyl-L-alanine + ADP + phosphate + H(+). Its pathway is cell wall biogenesis; peptidoglycan biosynthesis. In terms of biological role, cell wall formation. In Rhodospirillum centenum (strain ATCC 51521 / SW), this protein is UDP-N-acetylmuramate--L-alanine ligase.